We begin with the raw amino-acid sequence, 159 residues long: MSYSITSPSQFVFLSSVWADPIELLNVCTNSLGNQFQTQQARTTVQQQFSEVWKPFPQSTVRFPGDVYKVYRYNAVLDPLITALLGAFDTRNRIIEVENQQSPTTAETLDATRRVDDATVAIRSAINNLVNELVRGTGLYNQNTFESMSGLVWTSAPAS.

Ser-2 is modified (N-acetylserine; by host).

The protein belongs to the virgaviridae capsid protein family.

It localises to the virion. Functionally, capsid protein self-assembles to form rod-shaped virions about 18 nm in diameter with a central canal enclosing the viral genomic RNA. This chain is Capsid protein (CP), found in Tomato mosaic virus (strain L) (ToMV).